The sequence spans 162 residues: Large ribosomal subunit protein uL15 (162 aa).

Residues 1-18 (MKLNEIRDNEGATKDRMR) are compositionally biased toward basic and acidic residues. Residues 1 to 42 (MKLNEIRDNEGATKDRMRVGRGIGSGKGKTAGRGVKGQKART) are disordered. Residues 21–35 (RGIGSGKGKTAGRGV) are compositionally biased toward gly residues.

The protein belongs to the universal ribosomal protein uL15 family. In terms of assembly, part of the 50S ribosomal subunit.

Its function is as follows. Binds to the 23S rRNA. In Methylobacterium sp. (strain 4-46), this protein is Large ribosomal subunit protein uL15.